Consider the following 359-residue polypeptide: MAGNSIGQLFRVTTFGESHGIALGCIVDGVPPNMALSEADIQPDLDRRKPGTSRYTTPRREDDEVQILSGVFEGKTTGTSIGMIIKNGDQRSKDYGDIMDKFRPGHADYTYQQKYGIRDYRGGGRSSARETAMRVAAGAIAKKYLREQFGVEVRGFLSQIGDVKIAPQNISEIDWAQVNDNPFFCPDQSAVEKFDELIRQLKKDGDSIGAKLTVVAENVPVGLGEPVFDRLDADLAHALMGINAVKAVEIGDGFAVVEQRGTQHRDEMTPQGFLSNHAGGILGGISTGQPIIATIALKPTSSITVPGRTVNLNNEPVELITKGRHDPCVGIRAVPIAEAMTAIVLLDHLLRHRAQCGLK.

R48 and R54 together coordinate NADP(+). FMN contacts are provided by residues 125–127, 243–244, G283, 298–302, and R324; these read RSS, NA, and KPTSS.

This sequence belongs to the chorismate synthase family. In terms of assembly, homotetramer. Requires FMNH2 as cofactor.

It carries out the reaction 5-O-(1-carboxyvinyl)-3-phosphoshikimate = chorismate + phosphate. Its pathway is metabolic intermediate biosynthesis; chorismate biosynthesis; chorismate from D-erythrose 4-phosphate and phosphoenolpyruvate: step 7/7. Its function is as follows. Catalyzes the anti-1,4-elimination of the C-3 phosphate and the C-6 proR hydrogen from 5-enolpyruvylshikimate-3-phosphate (EPSP) to yield chorismate, which is the branch point compound that serves as the starting substrate for the three terminal pathways of aromatic amino acid biosynthesis. This reaction introduces a second double bond into the aromatic ring system. The sequence is that of Chorismate synthase from Mannheimia succiniciproducens (strain KCTC 0769BP / MBEL55E).